Consider the following 637-residue polypeptide: Zinc finger protein rsv2 (637 aa).

Disordered regions lie at residues 1 to 41 (MDTT…SKMN), 145 to 164 (SNHQFITTPPVNGSNEPTSA), 169 to 207 (IITANSSPSGNAGSNASASMSVPPPLTPSASTINDQPFS), 221 to 363 (TGAI…STAL), 404 to 427 (QDSFNKESIKQRIPSLSPPITRSY), and 440 to 558 (SVNP…GAQR). The segment covering 172–189 (ANSSPSGNAGSNASASMS) has biased composition (low complexity). The span at 196–207 (PSASTINDQPFS) shows a compositional bias: polar residues. Over residues 279–296 (SDLKRSLGHNQKSDRVSK) the composition is skewed to basic and acidic residues. Residues 298–344 (VSPQHQANPSTLNNPLKTQNFDSSKNLYTDNKDSSLVSPTGLQSRME) show a composition bias toward polar residues. Basic and acidic residues-rich tracts occupy residues 345–355 (QNPEVRAHPMK) and 404–413 (QDSFNKESIK). Positions 455-471 (VPSNTTISSSPPLTSPV) are enriched in low complexity. Polar residues-rich tracts occupy residues 472-498 (KTSANIPNLLPTSELDSSNAPHSQSAA) and 508-527 (YYNTRSSHSVVPNPTNQKVS). Residues 544–554 (TTPTNSSTTAT) show a composition bias toward low complexity. Residues 572–603 (VRCTLQNRVTGEICNTVFSRTYDLIRHQDTIH) form a C2H2-type 1 zinc finger. A C2H2-type 2; degenerate zinc finger spans residues 610 to 635 (FRCEICGDQRHFSRHDALVRHLRVKH).

The protein resides in the nucleus. The chain is Zinc finger protein rsv2 (rsv2) from Schizosaccharomyces pombe (strain 972 / ATCC 24843) (Fission yeast).